The chain runs to 236 residues: Small ribosomal subunit protein uS2c (236 aa).

The protein belongs to the universal ribosomal protein uS2 family.

It is found in the plastid. The protein localises to the chloroplast. The polypeptide is Small ribosomal subunit protein uS2c (rps2) (Phaseolus vulgaris (Kidney bean)).